A 622-amino-acid chain; its full sequence is Low affinity potassium transport system protein Kup (622 aa).

Transmembrane regions (helical) follow at residues 9-29, 49-69, 103-123, 137-157, 165-185, 213-233, 247-267, 276-296, 337-357, 363-383, 396-416, and 419-439; these read LPAI…TSPL, VFGF…IKYL, VIMG…TPAI, PQLD…LFMI, VGKL…VLGL, VSFI…ALYA, WFTV…ALLL, PFFL…AALA, IYIP…IVSF, LAAA…ILST, FVAL…SANL, and LLSG…IMTT.

This sequence belongs to the HAK/KUP transporter (TC 2.A.72) family.

It is found in the cell inner membrane. The catalysed reaction is K(+)(in) + H(+)(in) = K(+)(out) + H(+)(out). In terms of biological role, responsible for the low-affinity transport of potassium into the cell. Likely operates as a K(+):H(+) symporter. In Salmonella typhi, this protein is Low affinity potassium transport system protein Kup.